We begin with the raw amino-acid sequence, 187 residues long: NADH-quinone oxidoreductase subunit B (187 aa).

[4Fe-4S] cluster-binding residues include Cys46, Cys47, Cys112, and Cys141.

It belongs to the complex I 20 kDa subunit family. In terms of assembly, NDH-1 is composed of 14 different subunits. Subunits NuoB, C, D, E, F, and G constitute the peripheral sector of the complex. The cofactor is [4Fe-4S] cluster.

The protein resides in the cell inner membrane. The enzyme catalyses a quinone + NADH + 5 H(+)(in) = a quinol + NAD(+) + 4 H(+)(out). In terms of biological role, NDH-1 shuttles electrons from NADH, via FMN and iron-sulfur (Fe-S) centers, to quinones in the respiratory chain. The immediate electron acceptor for the enzyme in this species is believed to be ubiquinone. Couples the redox reaction to proton translocation (for every two electrons transferred, four hydrogen ions are translocated across the cytoplasmic membrane), and thus conserves the redox energy in a proton gradient. In Myxococcus xanthus (strain DK1622), this protein is NADH-quinone oxidoreductase subunit B.